Reading from the N-terminus, the 273-residue chain is Dermonecrotic toxin LdSicTox-alphaIB3aiii (273 aa).

Histidine 5 is a catalytic residue. Mg(2+)-binding residues include glutamate 25 and aspartate 27. The active-site Nucleophile is the histidine 41. Disulfide bonds link cysteine 45–cysteine 51 and cysteine 47–cysteine 190. Aspartate 85 contributes to the Mg(2+) binding site.

It belongs to the arthropod phospholipase D family. Class II subfamily. It depends on Mg(2+) as a cofactor. As to expression, expressed by the venom gland.

The protein resides in the secreted. It carries out the reaction an N-(acyl)-sphingosylphosphocholine = an N-(acyl)-sphingosyl-1,3-cyclic phosphate + choline. The enzyme catalyses an N-(acyl)-sphingosylphosphoethanolamine = an N-(acyl)-sphingosyl-1,3-cyclic phosphate + ethanolamine. It catalyses the reaction a 1-acyl-sn-glycero-3-phosphocholine = a 1-acyl-sn-glycero-2,3-cyclic phosphate + choline. The catalysed reaction is a 1-acyl-sn-glycero-3-phosphoethanolamine = a 1-acyl-sn-glycero-2,3-cyclic phosphate + ethanolamine. Functionally, dermonecrotic toxins cleave the phosphodiester linkage between the phosphate and headgroup of certain phospholipids (sphingolipid and lysolipid substrates), forming an alcohol (often choline) and a cyclic phosphate. This toxin acts on sphingomyelin (SM). It may also act on ceramide phosphoethanolamine (CPE), lysophosphatidylcholine (LPC) and lysophosphatidylethanolamine (LPE), but not on lysophosphatidylserine (LPS), and lysophosphatidylglycerol (LPG). It acts by transphosphatidylation, releasing exclusively cyclic phosphate products as second products. Induces dermonecrosis, hemolysis, increased vascular permeability, edema, inflammatory response, and platelet aggregation. This Loxosceles deserta (Desert recluse spider) protein is Dermonecrotic toxin LdSicTox-alphaIB3aiii.